A 566-amino-acid polypeptide reads, in one-letter code: Deformed epidermal autoregulatory factor 1 homolog (566 aa).

2 disordered regions span residues 33–62 (AESE…ETRR) and 163–191 (GLKG…KGGT). The span at 170–182 (PLTPGPQSPPTPL) shows a compositional bias: pro residues. The residue at position 172 (Thr172) is a Phosphothreonine. Position 177 is a phosphoserine (Ser177). Thr180 bears the Phosphothreonine mark. An SAND domain is found at 194-274 (NWDPSVYDSE…QCLIQDGILN (81 aa)). The Nuclear localization signal signature appears at 300 to 306 (PYKRRKK). The tract at residues 404-479 (IAPFPEAALP…QLKTLFEQAK (76 aa)) is interaction with LMO4. A Phosphothreonine modification is found at Thr433. Ser444 and Ser449 each carry phosphoserine. Zn(2+) contacts are provided by Cys505, Cys508, Cys516, Cys519, Cys525, Cys529, His537, and Cys541. An MYND-type zinc finger spans residues 505-541 (CVNCGREAMSECTGCHKVNYCSTFCQRKDWKDHQHVC).

In terms of assembly, homodimer. Isoform 1 and isoform 2 may form a heterodimer. May interact with the corepressors NCOR1 and NCRO2. Identified in a complex with XRCC5 and XRCC6. Interacts (via the SAND domain) with the DNA-PK complex subunit XRCC6; the interaction is direct with XRCC6 and may be inhibited by DNA-binding. Interacts with LMO4; LMO4 blocks export from nucleus. Interacts with LMO2 and CLIM2. Post-translationally, may be phosphorylated by DNA-PK complex in a DNA independent manner (in vitro). As to expression, ubiquitously expressed during embryogenesis, with higher expression in regions of the central nervous system, dorsal root ganglia, submandibular gland, epidermis and breast. In 12-week-old NOD mice, expression of isoform 2 is sevenfold higher in lymph node stromal elements than in T-cells and tenfold higher than in B-cells.

The protein localises to the nucleus. The protein resides in the cytoplasm. In terms of biological role, transcription factor that binds to sequence with multiple copies of 5'-TTC[CG]G-3' present in its own promoter and that of the HNRPA2B1 gene. Down-regulates transcription of these genes. Binds to the retinoic acid response element (RARE) 5'-AGGGTTCACCGAAAGTTCA-3'. Activates the proenkephalin gene independently of promoter binding, probably through protein-protein interaction. Regulates epithelial cell proliferation and side-branching in the mammary gland. Required for neural tube closure and skeletal patterning. Controls the expression of peripheral tissue antigens in pancreatic lymph nodes. Isoform 1 displays greater transcriptional activity than isoform 2. Isoform 2 may inhibit transcriptional activity of isoform 1 by interacting with it and retaining it in the cytoplasm. Transcriptional activator of EIF4G3. May also involved in behavior. The protein is Deformed epidermal autoregulatory factor 1 homolog (Deaf1) of Mus musculus (Mouse).